The primary structure comprises 434 residues: Adenylosuccinate synthetase (434 aa).

GTP is bound by residues 25–31 and 53–55; these read GDEGKGK and GHT. Aspartate 26 acts as the Proton acceptor in catalysis. Residues aspartate 26 and glycine 53 each coordinate Mg(2+). IMP contacts are provided by residues 26–29, 51–54, threonine 142, arginine 156, asparagine 233, threonine 248, and arginine 312; these read DEGK and NAGH. Residue histidine 54 is the Proton donor of the active site. 308–314 is a binding site for substrate; it reads VTTGRKR. Residues arginine 314, 340–342, and 422–424 each bind GTP; these read KLD and GVG.

It belongs to the adenylosuccinate synthetase family. In terms of assembly, homodimer. Mg(2+) is required as a cofactor.

It localises to the cytoplasm. The enzyme catalyses IMP + L-aspartate + GTP = N(6)-(1,2-dicarboxyethyl)-AMP + GDP + phosphate + 2 H(+). Its pathway is purine metabolism; AMP biosynthesis via de novo pathway; AMP from IMP: step 1/2. Its activity is regulated as follows. Competitively Inhibited by GMP. Allosterically inhibited by AMP. Functionally, plays an important role in the de novo pathway and in the salvage pathway of purine nucleotide biosynthesis. Catalyzes the first committed step in the biosynthesis of AMP from IMP. The protein is Adenylosuccinate synthetase (ade2) of Schizosaccharomyces pombe (strain 972 / ATCC 24843) (Fission yeast).